Reading from the N-terminus, the 473-residue chain is ATP synthase subunit beta (473 aa).

158 to 165 (GGAGVGKT) contributes to the ATP binding site.

Belongs to the ATPase alpha/beta chains family. In terms of assembly, F-type ATPases have 2 components, CF(1) - the catalytic core - and CF(0) - the membrane proton channel. CF(1) has five subunits: alpha(3), beta(3), gamma(1), delta(1), epsilon(1). CF(0) has three main subunits: a(1), b(2) and c(9-12). The alpha and beta chains form an alternating ring which encloses part of the gamma chain. CF(1) is attached to CF(0) by a central stalk formed by the gamma and epsilon chains, while a peripheral stalk is formed by the delta and b chains.

It localises to the cell membrane. The catalysed reaction is ATP + H2O + 4 H(+)(in) = ADP + phosphate + 5 H(+)(out). In terms of biological role, produces ATP from ADP in the presence of a proton gradient across the membrane. The catalytic sites are hosted primarily by the beta subunits. The sequence is that of ATP synthase subunit beta from Bacillus licheniformis (strain ATCC 14580 / DSM 13 / JCM 2505 / CCUG 7422 / NBRC 12200 / NCIMB 9375 / NCTC 10341 / NRRL NRS-1264 / Gibson 46).